A 71-amino-acid polypeptide reads, in one-letter code: Movement protein TGBp3 (71 aa).

At 1–3 (MEA) the chain is on the lumenal side. A helical membrane pass occupies residues 4–26 (GAYLNAIIFVLVATIIAVISVGL). The Cytoplasmic segment spans residues 27–71 (TQTEPCTIRITGESITVHACHLDSETIKALATLKPLSLERLSFHQ).

It belongs to the Tymovirales TGBp3 protein family.

It is found in the host endoplasmic reticulum membrane. Functionally, plays a role in viral cell-to-cell propagation, by facilitating genome transport to neighboring plant cells through plasmosdesmata. May induce the formation of granular vesicles derived from the Endoplasmic reticulum, which align on actin filaments. The polypeptide is Movement protein TGBp3 (Brassica campestris (Field mustard)).